The chain runs to 175 residues: Probable RNA-binding protein EIF1AD (175 aa).

One can recognise an S1-like domain in the interval 5–89; it reads TKKRYITNKV…VKGEIEYILD (85 aa). Residues 116–128 show a composition bias toward basic and acidic residues; sequence EAKRGQTSDKMID. The disordered stretch occupies residues 116 to 175; the sequence is EAKRGQTSDKMIDDDMLPPSESEEEDESEGEETYDEDDVDDEEEEEFDTYNPNRMQAPSK. A compositionally biased stretch (acidic residues) spans 129–163; sequence DDMLPPSESEEEDESEGEETYDEDDVDDEEEEEFD. A compositionally biased stretch (polar residues) spans 165-175; the sequence is YNPNRMQAPSK.

It belongs to the EIF1AD family.

This is Probable RNA-binding protein EIF1AD from Caenorhabditis elegans.